We begin with the raw amino-acid sequence, 74 residues long: uncharacterized protein (74 aa).

Residues 52–72 form a helical membrane-spanning segment; sequence ITFGFTVLGLGIGMIFGDAGL.

The protein resides in the membrane. This is an uncharacterized protein from Methanocaldococcus jannaschii (strain ATCC 43067 / DSM 2661 / JAL-1 / JCM 10045 / NBRC 100440) (Methanococcus jannaschii).